Reading from the N-terminus, the 126-residue chain is Small ribosomal subunit protein uS12 (126 aa).

Aspartate 89 carries the post-translational modification 3-methylthioaspartic acid.

The protein belongs to the universal ribosomal protein uS12 family. Part of the 30S ribosomal subunit. Contacts proteins S8 and S17. May interact with IF1 in the 30S initiation complex.

With S4 and S5 plays an important role in translational accuracy. Functionally, interacts with and stabilizes bases of the 16S rRNA that are involved in tRNA selection in the A site and with the mRNA backbone. Located at the interface of the 30S and 50S subunits, it traverses the body of the 30S subunit contacting proteins on the other side and probably holding the rRNA structure together. The combined cluster of proteins S8, S12 and S17 appears to hold together the shoulder and platform of the 30S subunit. The polypeptide is Small ribosomal subunit protein uS12 (Sulfurimonas denitrificans (strain ATCC 33889 / DSM 1251) (Thiomicrospira denitrificans (strain ATCC 33889 / DSM 1251))).